The chain runs to 791 residues: Vezatin (791 aa).

2 consecutive transmembrane segments (helical) span residues 138-158 (IATP…ALAA) and 163-183 (SISS…FTVL). Residues 435–464 (VRSLQLHLKALLNEVIILEDELEKLSSCKE) are a coiled coil. A compositionally biased stretch (acidic residues) spans 752 to 769 (GDEWDDDDDDNDNDDDNY). Residues 752–791 (GDEWDDDDDDNDNDDDNYDQVKNVESHEKERNNVSLQLEE) are disordered. Residues 773 to 783 (KNVESHEKERN) show a composition bias toward basic and acidic residues.

The protein belongs to the vezatin family. As to quaternary structure, interacts with myosin VIIa and the cadherin-catenins complex.

It is found in the cell membrane. The protein localises to the cell junction. Its subcellular location is the adherens junction. The protein resides in the nucleus. In terms of biological role, plays a pivotal role in the establishment of adherens junctions and their maintenance in adult life. This Xenopus tropicalis (Western clawed frog) protein is Vezatin (vezt).